Reading from the N-terminus, the 618-residue chain is Chaperone protein HscA homolog (618 aa).

It belongs to the heat shock protein 70 family.

Functionally, chaperone involved in the maturation of iron-sulfur cluster-containing proteins. Has a low intrinsic ATPase activity which is markedly stimulated by HscB. The chain is Chaperone protein HscA homolog from Methylibium petroleiphilum (strain ATCC BAA-1232 / LMG 22953 / PM1).